The sequence spans 559 residues: Acetylcholinesterase-1 (559 aa).

A signal peptide spans 1 to 21; sequence MMLPRCFVTVLLMSSVLYIGG. A disulfide bridge links cysteine 92 with cysteine 114. Residue 142 to 143 coordinates substrate; that stretch reads GG. The Acyl-ester intermediate role is filled by serine 223. Phosphoserine is present on serine 223. Cysteine 276 and cysteine 293 are joined by a disulfide. Asparagine 278 and asparagine 342 each carry an N-linked (GlcNAc...) asparagine glycan. Glutamate 354 acts as the Charge relay system in catalysis. Residue asparagine 374 is glycosylated (N-linked (GlcNAc...) asparagine). Cysteine 432 and cysteine 550 are joined by a disulfide. Histidine 471 serves as the catalytic Charge relay system.

The protein belongs to the type-B carboxylesterase/lipase family. Expressed by the venom gland.

It is found in the secreted. The enzyme catalyses acetylcholine + H2O = choline + acetate + H(+). Terminates signal transduction at the neuromuscular junction by rapid hydrolysis of the acetylcholine released into the synaptic cleft. In Trittame loki (Brush-footed trapdoor spider), this protein is Acetylcholinesterase-1.